Reading from the N-terminus, the 402-residue chain is Acetate kinase (402 aa).

Residue Asn10 participates in Mg(2+) binding. Lys17 is a binding site for ATP. Position 89 (Arg89) interacts with substrate. Residue Asp148 is the Proton donor/acceptor of the active site. Residues 208-212 (HLGNG), 283-285 (DCR), and 334-338 (GIGEN) contribute to the ATP site. Glu389 contributes to the Mg(2+) binding site.

Belongs to the acetokinase family. Homodimer. Mg(2+) is required as a cofactor. Requires Mn(2+) as cofactor.

Its subcellular location is the cytoplasm. It carries out the reaction acetate + ATP = acetyl phosphate + ADP. It functions in the pathway metabolic intermediate biosynthesis; acetyl-CoA biosynthesis; acetyl-CoA from acetate: step 1/2. Catalyzes the formation of acetyl phosphate from acetate and ATP. Can also catalyze the reverse reaction. This is Acetate kinase from Actinobacillus pleuropneumoniae serotype 7 (strain AP76).